A 341-amino-acid chain; its full sequence is Gibberellin 2-beta-dioxygenase 2 (341 aa).

Residues 179–283 form the Fe2OG dioxygenase domain; the sequence is KSDSCLRLNH…RISMIYFGGP (105 aa). Residues histidine 207, aspartate 209, and histidine 264 each contribute to the Fe cation site. The active site involves arginine 274. 2-oxoglutarate is bound at residue arginine 274.

Belongs to the iron/ascorbate-dependent oxidoreductase family. GA2OX subfamily. Fe(2+) is required as a cofactor. As to expression, preferentially expressed in flowers, siliques, and upper stems. Expressed in cotyledons, at the base of the shoot apical meristem and developing leaf primordia.

It catalyses the reaction gibberellin A1 + 2-oxoglutarate + O2 = gibberellin A8 + succinate + CO2. Its pathway is plant hormone biosynthesis; gibberellin biosynthesis. In terms of biological role, catalyzes the 2-beta-hydroxylation of several biologically active gibberellins, leading to the homeostatic regulation of their endogenous level. Catabolism of gibberellins (GAs) plays a central role in plant development. Converts GA9/GA20 to GA51/GA29 and GA4/GA1 to GA34/GA8. The chain is Gibberellin 2-beta-dioxygenase 2 (GA2OX2) from Arabidopsis thaliana (Mouse-ear cress).